Consider the following 1087-residue polypeptide: Kinesin-like protein KIN-14F (1087 aa).

In terms of domain architecture, Calponin-homology (CH) spans 1 to 110 (MDQGAMETLP…CILCLKGFYE (110 aa)). Positions 136-155 (SSPPQYGIGSESTTDESVSL) are disordered. A Kinesin motor domain is found at 377-705 (TIRVYCRVRP…LKFAQRVASI (329 aa)). Residue 461–468 (GQTGSGKT) participates in ATP binding. The stretch at 710–749 (ARSNKETGEIRDLKDEISSLKSAMEKKEAELEQLRSGSIR) forms a coiled coil. Disordered stretches follow at residues 740–858 (LEQL…PVSR), 923–949 (QGGVKKTRAESSKAKAKQPSPARFQKL), and 1004–1087 (DSTL…FMVP). Polar residues-rich tracts occupy residues 744–754 (RSGSIRNTTEC), 780–797 (PQPNDGTRSYETRSCSTG), and 836–856 (TDRASTIKSRNKPDVTQNLPV). A compositionally biased stretch (polar residues) spans 1017–1033 (EPPSKSKNAQRNSSKNS). Residues 1042–1054 (YAHEDTSLVDDKP) show a composition bias toward basic and acidic residues. The segment covering 1076 to 1087 (SRSTHHARFMVP) has biased composition (basic residues).

This sequence belongs to the TRAFAC class myosin-kinesin ATPase superfamily. Kinesin family. KIN-14 subfamily. Interacts (via C-terminus) with VDAC3. As to expression, expressed in roots, leaves, stems and flowers (at protein level).

The protein resides in the cytoplasm. The protein localises to the cytoskeleton. It is found in the mitochondrion. In terms of biological role, required for keeping the ATP levels stable and balancing the aerobic respiration pathways during seed germination at low temperature. This Arabidopsis thaliana (Mouse-ear cress) protein is Kinesin-like protein KIN-14F.